A 317-amino-acid polypeptide reads, in one-letter code: tRNA dimethylallyltransferase (317 aa).

Position 16–23 (16–23) interacts with ATP; sequence GPTASGKS. 18-23 contacts substrate; the sequence is TASGKS. Interaction with substrate tRNA regions lie at residues 41–44, 165–169, and 247–252; these read DSAQ, QRIQR, and RCVGYR.

This sequence belongs to the IPP transferase family. As to quaternary structure, monomer. It depends on Mg(2+) as a cofactor.

The catalysed reaction is adenosine(37) in tRNA + dimethylallyl diphosphate = N(6)-dimethylallyladenosine(37) in tRNA + diphosphate. Functionally, catalyzes the transfer of a dimethylallyl group onto the adenine at position 37 in tRNAs that read codons beginning with uridine, leading to the formation of N6-(dimethylallyl)adenosine (i(6)A). This is tRNA dimethylallyltransferase from Nitrosomonas eutropha (strain DSM 101675 / C91 / Nm57).